The following is an 879-amino-acid chain: Interference hedgehog (879 aa).

Positions 1–20 (MTLLTSSLLLFSLLTSRLEA) are cleaved as a signal peptide. Residues 21–703 (IPVLEKSPAH…ETFNMSPMLT (683 aa)) are Extracellular-facing. 4 Ig-like C2-type domains span residues 45-142 (PGVR…IARL), 132-232 (PLVV…ERIQ), 252-340 (PHLL…YIKV), and 346-432 (PQIV…LQVN). 4 disulfide bridges follow: Cys68–Cys126, Cys173–Cys220, Cys276–Cys324, and Cys367–Cys414. Residues Asn102 and Asn209 are each glycosylated (N-linked (GlcNAc...) asparagine). A disordered region spans residues 426–467 (GTLLQVNPKQIQEPRESGGTHRPKPNQGSKQKQMYPPSPPNV). 2 consecutive Fibronectin type-III domains span residues 461–567 (PPSP…LQPG) and 575–670 (VPEL…TQRP). N-linked (GlcNAc...) asparagine glycosylation is present at Asn466. Arg497, Lys501, Lys503, and Arg541 together coordinate heparin. Asn557 carries an N-linked (GlcNAc...) asparagine glycan. The segment at 662 to 698 (LKQGRTQRPKTSTTEEPTLQMGDRDTTTPSHNETFNM) is disordered. Polar residues-rich tracts occupy residues 665-678 (GRTQ…TEEP) and 688-698 (TTPSHNETFNM). N-linked (GlcNAc...) asparagine glycosylation is present at Asn693. A helical transmembrane segment spans residues 704-724 (GTLGGGAVLTLLLISICLCVC). Topologically, residues 725 to 879 (RRRSSRSRGN…SSGSLNSVGV (155 aa)) are cytoplasmic. The disordered stretch occupies residues 728-879 (SSRSRGNNPN…SSGSLNSVGV (152 aa)). Low complexity-rich tracts occupy residues 822–836 (RAGG…NNNN) and 863–879 (SSRS…SVGV).

This sequence belongs to the immunoglobulin superfamily. IHOG family. In terms of assembly, homodimer. Heterotetramer; 2 iHog chains bind 2 hh chains when facilitated by heparin, heparin is required to promote high-affinity interactions between hh and iHog.

Its subcellular location is the membrane. Mediates response to the active Hedgehog (Hh) protein signal in embryos, functioning upstream or at the level of patched (ptc). The protein is Interference hedgehog of Drosophila erecta (Fruit fly).